Reading from the N-terminus, the 161-residue chain is Assembly protein P7 (161 aa).

Homodimer. Part of the packaging complex composed of RDRP, P4 and P7. Interacts with RDRP.

It is found in the virion. Assembly protein part of the packaging complex that packages the viral RNA segments, replicate them into a double-stranded form and transcribe them. Required for efficient procapsid assembly. Necessary for stable packaging. May stabilize the RNA-dependent RNA polymerase (RdRP) in its position at the three-fold axis on the inner side of empty-unexpanded procapsids. Could play a role in viral RNA recognition. Seems to be involved in the regulation of plus strand synthesis (transcription) as a fidelity factor. The sequence is that of Assembly protein P7 (P7) from Pseudomonas phage phi6 (Bacteriophage phi-6).